The primary structure comprises 305 residues: Tyrosine recombinase XerC (305 aa).

The Core-binding (CB) domain maps to 2-88 (NQLELYIDTF…TLRSFYRFLE (87 aa)). Residues 109-294 (PVPGFLYQEE…TKDHLREAYM (186 aa)) form the Tyr recombinase domain. Residues Arg149, Lys173, His246, Arg249, and His272 contribute to the active site. The O-(3'-phospho-DNA)-tyrosine intermediate role is filled by Tyr281.

The protein belongs to the 'phage' integrase family. XerC subfamily. In terms of assembly, forms a cyclic heterotetrameric complex composed of two molecules of XerC and two molecules of XerD.

The protein resides in the cytoplasm. Functionally, site-specific tyrosine recombinase, which acts by catalyzing the cutting and rejoining of the recombining DNA molecules. The XerC-XerD complex is essential to convert dimers of the bacterial chromosome into monomers to permit their segregation at cell division. It also contributes to the segregational stability of plasmids. This is Tyrosine recombinase XerC from Oceanobacillus iheyensis (strain DSM 14371 / CIP 107618 / JCM 11309 / KCTC 3954 / HTE831).